The chain runs to 308 residues: Ribosomal RNA small subunit methyltransferase H (308 aa).

S-adenosyl-L-methionine is bound by residues 32 to 34 (GGH), D52, F78, D100, and Q107.

The protein belongs to the methyltransferase superfamily. RsmH family.

The protein localises to the cytoplasm. The catalysed reaction is cytidine(1402) in 16S rRNA + S-adenosyl-L-methionine = N(4)-methylcytidine(1402) in 16S rRNA + S-adenosyl-L-homocysteine + H(+). Specifically methylates the N4 position of cytidine in position 1402 (C1402) of 16S rRNA. This is Ribosomal RNA small subunit methyltransferase H from Legionella pneumophila (strain Paris).